A 619-amino-acid polypeptide reads, in one-letter code: Zinc finger protein 131 (619 aa).

The BTB domain maps to 34 to 98 (TDITLIVDGH…TYTAKLMIQG (65 aa)). Residues 137–148 (TGKNEAKKRKIA) carry the Nuclear localization signal 1 motif. A Phosphoserine modification is found at serine 231. C2H2-type zinc fingers lie at residues 261-283 (FHCEKCNRSFKLFYHFKEHMKSH), 288-311 (FKCEICNKRYLRESAWKQHLNCYH), and 328-350 (HICQYCDKQFDHFGHFKEHLRKH). Glycyl lysine isopeptide (Lys-Gly) (interchain with G-Cter in SUMO2) cross-links involve residues lysine 289 and lysine 295. The Nuclear localization signal 2 motif lies at 317–328 (VSKKQRTGKKIH). The C2H2-type 4; degenerate zinc finger occupies 356–381 (FECSNCHERFARNSTLKCHLTACQTG). 2 C2H2-type zinc fingers span residues 392 to 414 (YECQVCNSVFNSWDQFKDHLVIH) and 420 to 443 (NHCTLCDLWFMQGNELRRHLSDAH). 2 stretches are compositionally biased toward basic and acidic residues: residues 574-587 (QEEREPNHADAAME) and 595-612 (LETKPSEYSQARKTENDR). Residues 574 to 619 (QEEREPNHADAAMEEHEDAEGLETKPSEYSQARKTENDRTSLPVLE) form a disordered region. A Glycyl lysine isopeptide (Lys-Gly) (interchain with G-Cter in SUMO) cross-link involves residue lysine 598.

The protein belongs to the krueppel C2H2-type zinc-finger protein family. In terms of processing, monosumoylated at Lys-598 by CBX4 and UHRF2. Sumoylation may potentiate ZNF131 inhibition of estrogen signaling. Sumoylation does not interfere with ubiquitination. Ubiquitinated. Ubiquitously expressed. Predominant expression is found in the developing central nervous system with strongest signals in the forebrain, midbrain, and hindbrain areas and in the neural tube.

Its subcellular location is the nucleus. Functionally, may be involved in transcriptional regulation as a repressor of ESR1/ER-alpha signaling. Plays a role during development and organogenesis as well as in the function of the adult central nervous system. In Mus musculus (Mouse), this protein is Zinc finger protein 131 (Znf131).